Consider the following 197-residue polypeptide: Putative eggshell protein (197 aa).

The N-terminal stretch at 1-17 (MKFHLVLLLAIVPLTLA) is a signal peptide.

The chain is Putative eggshell protein from Fasciola hepatica (Liver fluke).